We begin with the raw amino-acid sequence, 624 residues long: Laccase-1 (624 aa).

The first 20 residues, 1-20 (MRGVVKLFFLSCSLVSLVSS), serve as a signal peptide directing secretion. Plastocyanin-like domains are found at residues 69–183 (TKAL…HSPN) and 195–355 (DRIV…VVRY). Residues H117, H119, H162, and H164 each coordinate Cu cation. An intrachain disulfide couples C138 to C578. Residues N242, N320, and N430 are each glycosylated (N-linked (GlcNAc...) asparagine). Positions 469-562 (IIINNLDGVI…GKLAVVVIQP (94 aa)) constitute a Plastocyanin-like 3 domain. 3 residues coordinate Cu cation: H480, H483, and H485. An N-linked (GlcNAc...) asparagine glycan is attached at N503. The Cu cation site is built by H543, C544, H545, and H549. Residues 582–603 (DPNAFGPARRSPSPSIQSSKTS) are disordered. Residues 592–603 (SPSPSIQSSKTS) show a composition bias toward low complexity.

This sequence belongs to the multicopper oxidase family. It depends on Cu cation as a cofactor.

The protein localises to the secreted. The protein resides in the cell wall. It catalyses the reaction 4 hydroquinone + O2 = 4 benzosemiquinone + 2 H2O. In terms of biological role, laccase that catalyzes the oxidation of certain aromatic compounds, including L-dopa, to quinones, which then polymerize to melanin. Able to oxidize a wide variety of aromatic diphenol and diamino groups in the ortho, meta, and para positions but not monophenolic groups such as in phenol, tyramine, or tyrosine. Plays an important role in virulence. Plays a role in dissemination to extrapulmonary sites but is not involved in pulmonary growth or in elicitation of cellular immune responses in the lung. The chain is Laccase-1 (LAC1) from Cryptococcus neoformans var. grubii serotype A (strain H99 / ATCC 208821 / CBS 10515 / FGSC 9487) (Filobasidiella neoformans var. grubii).